The following is a 445-amino-acid chain: Arginine/agmatine antiporter (445 aa).

Residues 1-9 (MSSDADAHK) are Cytoplasmic-facing. A helical membrane pass occupies residues 10-30 (VGLIPVTLMVSGNIMGSGVFL). Ile-23 is a binding site for agmatine. The L-arginine site is built by Ile-23 and Ser-26. Residues 31-38 (LPANLAAT) are Periplasmic-facing. A helical transmembrane segment spans residues 39-59 (GGIAIYGWLVTIIGALALSMV). At 60–98 (YAKMSSLDPSPGGSYAYARRCFGPFLGYQTNVLYWLACW) the chain is on the cytoplasmic side. Agmatine is bound by residues Ala-96, Cys-97, and Asn-101. Ala-96 serves as a coordination point for L-arginine. The helical transmembrane segment at 99-119 (IGNIAMVVIGVGYLSYFFPIL) threads the bilayer. Over 120–122 (KDP) the chain is Periplasmic. A helical transmembrane segment spans residues 123–143 (LVLTLTCVAVLWIFVLLNIVG). Residues 144-152 (PKMITRVQA) are Cytoplasmic-facing. The helical transmembrane segment at 153 to 173 (VATVLALVPIVGIAVFGWFWF) threads the bilayer. Residues 174–196 (KGETYMAAWNVSGMNTFGAIQST) lie on the Periplasmic side of the membrane. The chain crosses the membrane as a helical span at residues 197–217 (LNVTLWSFIGVESASVAAGVV). Trp-202 and Ile-205 together coordinate L-arginine. Ile-205 provides a ligand contact to agmatine. Residues 218–225 (KNPKRNVP) are Cytoplasmic-facing. Residues 226 to 246 (IATIGGVLIAAVCYVLSTTAI) form a helical membrane-spanning segment. Residues 247–275 (MGMIPNAALRVSASPFGDAARMALGDTAG) are Periplasmic-facing. The chain crosses the membrane as a helical span at residues 276–296 (AIVSFCAAAGCLGSLGGWTLL). Trp-293 provides a ligand contact to agmatine. Residues 297-319 (AGQTAKAAADDGLFPPIFARVNK) are Cytoplasmic-facing. The helical transmembrane segment at 320 to 340 (AGTPVAGLLIVGVLMTIFQFS) threads the bilayer. The Periplasmic portion of the chain corresponds to 341-355 (SMSPNAAKEFGLVSS). A helical transmembrane segment spans residues 356-376 (VSVIFTLVPYLYTCAALLLLG). Ser-357 is a binding site for L-arginine. At 377–385 (HGHFGKARP) the chain is on the cytoplasmic side. The helical transmembrane segment at 386-406 (LYLLITFVAFVYCIWAVIGSG) threads the bilayer. Residues 407 to 408 (AK) lie on the Periplasmic side of the membrane. The chain crosses the membrane as a helical span at residues 409 to 429 (EVMWSFVTLMVITALYALNYN). At 430-445 (RIHKNPYPLDAPVKQD) the chain is on the cytoplasmic side.

It belongs to the amino acid-polyamine-organocation (APC) superfamily. Basic amino acid/polyamine antiporter (APA) (TC 2.A.3.2) family. Homodimer; each subunit has its own individual transport capacity.

Its subcellular location is the cell inner membrane. It catalyses the reaction agmatine(in) + L-arginine(out) = agmatine(out) + L-arginine(in). Its function is as follows. Major component of the acid-resistance (AR) system allowing enteric pathogens to survive the acidic environment in the stomach. Exchanges extracellular arginine for its intracellular decarboxylation product agmatine (Agm) thereby expelling intracellular protons. Probably undergoes several conformational states in order to translocate the substrate across the membrane; keeps the substrate accessible to only 1 side of the membrane at a time by opening and closing 3 membrane-internal gates. This Salmonella typhi protein is Arginine/agmatine antiporter (adiC).